Consider the following 465-residue polypeptide: tRNA-2-methylthio-N(6)-dimethylallyladenosine synthase (465 aa).

One can recognise an MTTase N-terminal domain in the interval 5–125; the sequence is RKLHIKSYGC…LPELLKRAGN (121 aa). [4Fe-4S] cluster is bound by residues Cys14, Cys50, Cys88, Cys166, Cys170, and Cys173. One can recognise a Radical SAM core domain in the interval 152–384; sequence RARGISAFVT…QELIDSQQSA (233 aa). Residues 387–449 form the TRAM domain; that stretch reads KAAIGSTVDV…RYSFLGELVT (63 aa).

The protein belongs to the methylthiotransferase family. MiaB subfamily. In terms of assembly, monomer. It depends on [4Fe-4S] cluster as a cofactor.

It is found in the cytoplasm. The enzyme catalyses N(6)-dimethylallyladenosine(37) in tRNA + (sulfur carrier)-SH + AH2 + 2 S-adenosyl-L-methionine = 2-methylsulfanyl-N(6)-dimethylallyladenosine(37) in tRNA + (sulfur carrier)-H + 5'-deoxyadenosine + L-methionine + A + S-adenosyl-L-homocysteine + 2 H(+). Its function is as follows. Catalyzes the methylthiolation of N6-(dimethylallyl)adenosine (i(6)A), leading to the formation of 2-methylthio-N6-(dimethylallyl)adenosine (ms(2)i(6)A) at position 37 in tRNAs that read codons beginning with uridine. This chain is tRNA-2-methylthio-N(6)-dimethylallyladenosine synthase, found in Bradyrhizobium diazoefficiens (strain JCM 10833 / BCRC 13528 / IAM 13628 / NBRC 14792 / USDA 110).